The primary structure comprises 171 residues: Ribosome-binding factor A (171 aa).

Residues 120 to 132 are compositionally biased toward low complexity; it reads AALAAAAQPAGDP. The tract at residues 120–171 is disordered; the sequence is AALAAAAQPAGDPDPYKKPVDHTDDWDEDDEDDRDGDDAVDALDAAADVPRL. Basic and acidic residues predominate over residues 133–142; that stretch reads DPYKKPVDHT. Over residues 143 to 160 the composition is skewed to acidic residues; sequence DDWDEDDEDDRDGDDAVD. Low complexity predominate over residues 161 to 171; sequence ALDAAADVPRL.

This sequence belongs to the RbfA family. Monomer. Binds 30S ribosomal subunits, but not 50S ribosomal subunits or 70S ribosomes.

It localises to the cytoplasm. Functionally, one of several proteins that assist in the late maturation steps of the functional core of the 30S ribosomal subunit. Associates with free 30S ribosomal subunits (but not with 30S subunits that are part of 70S ribosomes or polysomes). Required for efficient processing of 16S rRNA. May interact with the 5'-terminal helix region of 16S rRNA. This chain is Ribosome-binding factor A, found in Kineococcus radiotolerans (strain ATCC BAA-149 / DSM 14245 / SRS30216).